The chain runs to 376 residues: MNNRIPEDLIERAYQGKSTKEDGLLLLEVPPFELFRFADELRSLTAGDTVTYVVNRNINFTSRCVGTCGFCAFRTNDGKVLSIEEIMEKVREAEKAKATEVCIQGGLLPDVGLDFYQEIAESIKAEFPEMHIHAFSPMEVYHASHISGIKVSEALSKLKRSGLDTMPGTAAEILSDRVRKIICPSKLRTAEWIEVVTQAHAAGIPTTATMMYGHVETPEERIEHILTIREIQKETGGITEFVPLPFMPYNNPVGEKIIREGRYATPGLDDLKIYAISRILLHGHVDNIQASWVKLGKKLSQFALQCGANDLGGTLMEESISRLAGAPNGESISVEELEWMIYGAGRVPKERTTLYKGVRELASRNPGRITGCGASE.

A Radical SAM core domain is found at 50-284 (VTYVVNRNIN…AISRILLHGH (235 aa)). [4Fe-4S] cluster contacts are provided by cysteine 64, cysteine 68, and cysteine 71.

This sequence belongs to the radical SAM superfamily. CofH family. As to quaternary structure, consists of two subunits, CofG and CofH. Requires [4Fe-4S] cluster as cofactor.

It catalyses the reaction 5-amino-6-(D-ribitylamino)uracil + L-tyrosine + S-adenosyl-L-methionine = 5-amino-5-(4-hydroxybenzyl)-6-(D-ribitylimino)-5,6-dihydrouracil + 2-iminoacetate + 5'-deoxyadenosine + L-methionine + H(+). Its pathway is cofactor biosynthesis; coenzyme F0 biosynthesis. Catalyzes the radical-mediated synthesis of 5-amino-5-(4-hydroxybenzyl)-6-(D-ribitylimino)-5,6-dihydrouracil from 5-amino-6-(D-ribitylamino)uracil and L-tyrosine. In Methanosarcina barkeri (strain Fusaro / DSM 804), this protein is 5-amino-6-(D-ribitylamino)uracil--L-tyrosine 4-hydroxyphenyl transferase 1.